Reading from the N-terminus, the 810-residue chain is Lon protease (810 aa).

Residues 32-226 (LPAIAMRSNM…RILDILARET (195 aa)) form the Lon N-terminal domain. 376–383 (GPPGVGKT) provides a ligand contact to ATP. The Lon proteolytic domain maps to 612 to 791 (KPMIGVTTGL…EEVLEVALNE (180 aa)). Active-site residues include serine 697 and lysine 740.

Belongs to the peptidase S16 family. Homohexamer. Organized in a ring with a central cavity.

It localises to the cytoplasm. It carries out the reaction Hydrolysis of proteins in presence of ATP.. ATP-dependent serine protease that mediates the selective degradation of mutant and abnormal proteins as well as certain short-lived regulatory proteins. Required for cellular homeostasis and for survival from DNA damage and developmental changes induced by stress. Degrades polypeptides processively to yield small peptide fragments that are 5 to 10 amino acids long. Binds to DNA in a double-stranded, site-specific manner. The chain is Lon protease from Fervidobacterium nodosum (strain ATCC 35602 / DSM 5306 / Rt17-B1).